Here is a 257-residue protein sequence, read N- to C-terminus: Acetylglutamate kinase (257 aa).

Substrate is bound by residues 43–44 (GG), arginine 65, and asparagine 157. ATP-binding positions include 180–185 (DVSGIL) and 208–210 (IIT).

Belongs to the acetylglutamate kinase family. ArgB subfamily. Homodimer.

The protein resides in the cytoplasm. It catalyses the reaction N-acetyl-L-glutamate + ATP = N-acetyl-L-glutamyl 5-phosphate + ADP. Its pathway is amino-acid biosynthesis; L-arginine biosynthesis; N(2)-acetyl-L-ornithine from L-glutamate: step 2/4. Catalyzes the ATP-dependent phosphorylation of N-acetyl-L-glutamate. The sequence is that of Acetylglutamate kinase from Klebsiella pneumoniae (strain 342).